Here is a 274-residue protein sequence, read N- to C-terminus: 2,3,4,5-tetrahydropyridine-2,6-dicarboxylate N-succinyltransferase (274 aa).

Residues Arg104 and Asp141 each contribute to the substrate site.

This sequence belongs to the transferase hexapeptide repeat family. As to quaternary structure, homotrimer.

It is found in the cytoplasm. It catalyses the reaction (S)-2,3,4,5-tetrahydrodipicolinate + succinyl-CoA + H2O = (S)-2-succinylamino-6-oxoheptanedioate + CoA. The protein operates within amino-acid biosynthesis; L-lysine biosynthesis via DAP pathway; LL-2,6-diaminopimelate from (S)-tetrahydrodipicolinate (succinylase route): step 1/3. The protein is 2,3,4,5-tetrahydropyridine-2,6-dicarboxylate N-succinyltransferase of Edwardsiella ictaluri (strain 93-146).